Here is a 455-residue protein sequence, read N- to C-terminus: UDP-N-acetylmuramate--L-alanine ligase (455 aa).

109-115 contributes to the ATP binding site; the sequence is GTHGKTT.

Belongs to the MurCDEF family.

The protein resides in the cytoplasm. It catalyses the reaction UDP-N-acetyl-alpha-D-muramate + L-alanine + ATP = UDP-N-acetyl-alpha-D-muramoyl-L-alanine + ADP + phosphate + H(+). It participates in cell wall biogenesis; peptidoglycan biosynthesis. In terms of biological role, cell wall formation. The sequence is that of UDP-N-acetylmuramate--L-alanine ligase from Caldicellulosiruptor bescii (strain ATCC BAA-1888 / DSM 6725 / KCTC 15123 / Z-1320) (Anaerocellum thermophilum).